Here is a 443-residue protein sequence, read N- to C-terminus: UDP-N-acetylmuramate--L-alanine ligase (443 aa).

110-116 (GAHGKTS) serves as a coordination point for ATP.

This sequence belongs to the MurCDEF family.

It localises to the cytoplasm. The enzyme catalyses UDP-N-acetyl-alpha-D-muramate + L-alanine + ATP = UDP-N-acetyl-alpha-D-muramoyl-L-alanine + ADP + phosphate + H(+). The protein operates within cell wall biogenesis; peptidoglycan biosynthesis. Its function is as follows. Cell wall formation. The polypeptide is UDP-N-acetylmuramate--L-alanine ligase (Streptococcus agalactiae serotype III (strain NEM316)).